The following is a 1806-amino-acid chain: uncharacterized protein (1806 aa).

Disordered regions lie at residues Glu38–Phe131 and Lys158–Pro282. The span at Lys51–Pro70 shows a compositional bias: low complexity. A phosphoserine mark is found at Ser52, Ser56, Ser79, Ser87, Ser88, Ser92, and Ser128. Positions Pro82 to Glu100 are enriched in low complexity. The span at Asp226 to Pro236 shows a compositional bias: basic and acidic residues. Ser244 and Ser284 each carry phosphoserine. 4 disordered regions span residues Arg299–Arg320, Lys355–Trp431, Ser456–Asp604, and Gln627–Pro696. Ser366 carries the post-translational modification Phosphoserine. Residue Thr378 is modified to Phosphothreonine. A Phosphoserine modification is found at Ser384. Residues Trp386–Ala400 show a composition bias toward basic and acidic residues. Phosphoserine is present on Ser404. The segment covering Glu412–Asp422 has biased composition (basic and acidic residues). Over residues Ser456–Pro470 the composition is skewed to low complexity. Residues Ser458 and Ser508 each carry the phosphoserine modification. Residues Leu514–Glu523 are compositionally biased toward polar residues. 2 stretches are compositionally biased toward basic and acidic residues: residues Val524–Ser549 and Thr564–Glu573. Thr600 carries the phosphothreonine modification. 2 stretches are compositionally biased toward basic and acidic residues: residues Ala641–Pro652 and Asp661–Arg674. Ser749 bears the Phosphoserine mark. Disordered stretches follow at residues Gln860–Thr901, Ser969–Lys989, and Gln1000–Ser1019. The span at Arg889–Arg900 shows a compositional bias: polar residues. Phosphoserine occurs at positions 969 and 981. Basic and acidic residues predominate over residues Ser969 to Asp978. Thr1059 is modified (phosphothreonine). Phosphoserine occurs at positions 1063 and 1154. The interval Arg1134–Lys1178 is disordered. Polar residues predominate over residues Pro1142–Leu1166. A Phosphothreonine modification is found at Thr1163. The span at Arg1169–Lys1178 shows a compositional bias: basic and acidic residues. Residues Thr1179 and Thr1185 each carry the phosphothreonine modification. Disordered stretches follow at residues Pro1216–Ser1265 and Lys1291–Val1493. Position 1224 is a phosphoserine (Ser1224). Thr1226 is subject to Phosphothreonine. Basic and acidic residues-rich tracts occupy residues Glu1244–Pro1254 and Asp1317–Ala1331. Ser1366 is modified (phosphoserine). Basic and acidic residues-rich tracts occupy residues Asp1393–Ser1410 and His1426–Lys1437. Ser1441 carries the post-translational modification Phosphoserine. Residues Asp1462–Pro1483 are compositionally biased toward basic and acidic residues. 2 positions are modified to phosphoserine: Ser1488 and Ser1506. Disordered regions lie at residues Gln1512–Asp1627 and Ala1642–Val1806. Residues Thr1522 to Val1531 show a composition bias toward basic and acidic residues. The span at Gln1537–Pro1568 shows a compositional bias: polar residues. A phosphoserine mark is found at Ser1555 and Ser1662. A compositionally biased stretch (basic residues) spans Leu1649 to Ser1666. 2 stretches are compositionally biased toward basic and acidic residues: residues Arg1667–Leu1677 and Asp1689–Pro1714. A phosphoserine mark is found at Ser1701, Ser1757, Ser1760, and Ser1786. Over residues Pro1753–Pro1764 the composition is skewed to low complexity.

This is an uncharacterized protein from Homo sapiens (Human).